A 349-amino-acid chain; its full sequence is Protein RecA (349 aa).

65 to 72 serves as a coordination point for ATP; it reads GPESSGKT.

The protein belongs to the RecA family.

The protein localises to the cytoplasm. Its function is as follows. Can catalyze the hydrolysis of ATP in the presence of single-stranded DNA, the ATP-dependent uptake of single-stranded DNA by duplex DNA, and the ATP-dependent hybridization of homologous single-stranded DNAs. It interacts with LexA causing its activation and leading to its autocatalytic cleavage. This Azotobacter vinelandii protein is Protein RecA.